The sequence spans 502 residues: ATP synthase subunit alpha (502 aa).

169–176 (GDRQTGKT) contacts ATP.

This sequence belongs to the ATPase alpha/beta chains family. As to quaternary structure, F-type ATPases have 2 components, CF(1) - the catalytic core - and CF(0) - the membrane proton channel. CF(1) has five subunits: alpha(3), beta(3), gamma(1), delta(1), epsilon(1). CF(0) has three main subunits: a(1), b(2) and c(9-12). The alpha and beta chains form an alternating ring which encloses part of the gamma chain. CF(1) is attached to CF(0) by a central stalk formed by the gamma and epsilon chains, while a peripheral stalk is formed by the delta and b chains.

Its subcellular location is the cell membrane. It carries out the reaction ATP + H2O + 4 H(+)(in) = ADP + phosphate + 5 H(+)(out). Produces ATP from ADP in the presence of a proton gradient across the membrane. The alpha chain is a regulatory subunit. The protein is ATP synthase subunit alpha of Streptococcus pyogenes serotype M12 (strain MGAS9429).